A 126-amino-acid polypeptide reads, in one-letter code: Histone H2B type 1-K (126 aa).

A compositionally biased stretch (low complexity) spans methionine 1–lysine 12. The interval methionine 1 to glutamate 36 is disordered. Position 2 is an N-acetylproline (proline 2). Residue glutamate 3 is modified to ADP-ribosyl glutamic acid. Position 6 is an N6-(2-hydroxyisobutyryl)lysine; alternate (lysine 6). Lysine 6 carries the post-translational modification N6-(beta-hydroxybutyryl)lysine; alternate. N6-acetyllysine; alternate is present on lysine 6. At lysine 6 the chain carries N6-butyryllysine; alternate. Lysine 6 bears the N6-crotonyllysine; alternate mark. The residue at position 6 (lysine 6) is an N6-lactoyllysine; alternate. Lysine 6 is covalently cross-linked (Glycyl lysine isopeptide (Lys-Gly) (interchain with G-Cter in SUMO2); alternate). Position 7 is an ADP-ribosylserine (serine 7). The residue at position 12 (lysine 12) is an N6-(beta-hydroxybutyryl)lysine; alternate. N6-acetyllysine; alternate is present on residues lysine 12 and lysine 13. Lysine 12 and lysine 13 each carry N6-crotonyllysine; alternate. Lysine 12 is subject to N6-lactoyllysine; alternate. The residue at position 13 (lysine 13) is an N6-(2-hydroxyisobutyryl)lysine; alternate. The residue at position 15 (serine 15) is a Phosphoserine; by STK4/MST1. 4 positions are modified to N6-acetyllysine; alternate: lysine 16, lysine 17, lysine 21, and lysine 24. Lysine 16, lysine 17, lysine 21, lysine 24, and lysine 35 each carry N6-crotonyllysine; alternate. N6-lactoyllysine; alternate occurs at positions 16, 17, 21, and 24. The residue at position 17 (lysine 17) is an N6-glutaryllysine; alternate. N6-(2-hydroxyisobutyryl)lysine; alternate occurs at positions 21, 24, and 35. Residue lysine 21 is modified to N6-(beta-hydroxybutyryl)lysine; alternate. Lysine 21 is subject to N6-butyryllysine; alternate. Lysine 21 participates in a covalent cross-link: Glycyl lysine isopeptide (Lys-Gly) (interchain with G-Cter in SUMO2); alternate. Lysine 35 is modified (N6-(beta-hydroxybutyryl)lysine; alternate). Lysine 35 carries the N6-glutaryllysine; alternate modification. Position 35 is an N6-succinyllysine; alternate (lysine 35). Residue lysine 35 forms a Glycyl lysine isopeptide (Lys-Gly) (interchain with G-Cter in ubiquitin); alternate linkage. At glutamate 36 the chain carries PolyADP-ribosyl glutamic acid. Serine 37 is modified (phosphoserine; by AMPK). An N6-(2-hydroxyisobutyryl)lysine; alternate mark is found at lysine 44, lysine 47, and lysine 58. Residue lysine 44 is modified to N6-lactoyllysine; alternate. N6-glutaryllysine; alternate occurs at positions 44 and 47. Lysine 47 carries the post-translational modification N6-methyllysine; alternate. Lysine 58 carries the N6,N6-dimethyllysine; alternate modification. Arginine 80 is subject to Dimethylated arginine. N6-(2-hydroxyisobutyryl)lysine; alternate is present on lysine 86. The residue at position 86 (lysine 86) is an N6-acetyllysine; alternate. Lysine 86 is modified (N6-lactoyllysine; alternate). Lysine 86 bears the N6,N6,N6-trimethyllysine; alternate mark. Omega-N-methylarginine is present on residues arginine 87 and arginine 93. Position 109 is an N6-(2-hydroxyisobutyryl)lysine; alternate (lysine 109). Lysine 109 carries the N6-lactoyllysine; alternate modification. Lysine 109 carries the N6-glutaryllysine; alternate modification. Lysine 109 bears the N6-methyllysine; alternate mark. Serine 113 carries an O-linked (GlcNAc) serine glycan. Residue threonine 116 is modified to Phosphothreonine. Lysine 117 and lysine 121 each carry N6-(2-hydroxyisobutyryl)lysine; alternate. N6-(beta-hydroxybutyryl)lysine; alternate is present on lysine 117. N6-lactoyllysine; alternate occurs at positions 117 and 121. Residues lysine 117 and lysine 121 each carry the N6-glutaryllysine; alternate modification. N6-succinyllysine; alternate occurs at positions 117 and 121. Position 117 is an N6-methylated lysine; alternate (lysine 117). Residue lysine 121 forms a Glycyl lysine isopeptide (Lys-Gly) (interchain with G-Cter in ubiquitin); alternate linkage.

It belongs to the histone H2B family. As to quaternary structure, the nucleosome is a histone octamer containing two molecules each of H2A, H2B, H3 and H4 assembled in one H3-H4 heterotetramer and two H2A-H2B heterodimers. The octamer wraps approximately 147 bp of DNA. Post-translationally, monoubiquitination at Lys-35 (H2BK34Ub) by the MSL1/MSL2 dimer is required for histone H3 'Lys-4' (H3K4me) and 'Lys-79' (H3K79me) methylation and transcription activation at specific gene loci, such as HOXA9 and MEIS1 loci. Similarly, monoubiquitination at Lys-121 (H2BK120Ub) by the RNF20/40 complex gives a specific tag for epigenetic transcriptional activation and is also prerequisite for histone H3 'Lys-4' and 'Lys-79' methylation. It also functions cooperatively with the FACT dimer to stimulate elongation by RNA polymerase II. H2BK120Ub also acts as a regulator of mRNA splicing: deubiquitination by USP49 is required for efficient cotranscriptional splicing of a large set of exons. Phosphorylated on Ser-15 (H2BS14ph) by STK4/MST1 during apoptosis; which facilitates apoptotic chromatin condensation. Also phosphorylated on Ser-15 in response to DNA double strand breaks (DSBs), and in correlation with somatic hypermutation and immunoglobulin class-switch recombination. Phosphorylation at Ser-37 (H2BS36ph) by AMPK in response to stress promotes transcription. In terms of processing, glcNAcylation at Ser-113 promotes monoubiquitination of Lys-121. It fluctuates in response to extracellular glucose, and associates with transcribed genes. Post-translationally, ADP-ribosylated by PARP1 or PARP2 on Ser-7 (H2BS6ADPr) in response to DNA damage. H2BS6ADPr promotes recruitment of CHD1L. Mono-ADP-ribosylated on Glu-3 (H2BE2ADPr) by PARP3 in response to single-strand breaks. Poly ADP-ribosylation on Glu-36 (H2BE35ADPr) by PARP1 regulates adipogenesis: it inhibits phosphorylation at Ser-37 (H2BS36ph), thereby blocking expression of pro-adipogenetic genes. Crotonylation (Kcr) is specifically present in male germ cells and marks testis-specific genes in post-meiotic cells, including X-linked genes that escape sex chromosome inactivation in haploid cells. Crotonylation marks active promoters and enhancers and confers resistance to transcriptional repressors. It is also associated with post-meiotically activated genes on autosomes. In terms of processing, lactylated in macrophages by EP300/P300 by using lactoyl-CoA directly derived from endogenous or exogenous lactate, leading to stimulates gene transcription.

The protein localises to the nucleus. It localises to the chromosome. Functionally, core component of nucleosome. Nucleosomes wrap and compact DNA into chromatin, limiting DNA accessibility to the cellular machineries which require DNA as a template. Histones thereby play a central role in transcription regulation, DNA repair, DNA replication and chromosomal stability. DNA accessibility is regulated via a complex set of post-translational modifications of histones, also called histone code, and nucleosome remodeling. The sequence is that of Histone H2B type 1-K from Bos taurus (Bovine).